The primary structure comprises 398 residues: Phosphoglycerate kinase (398 aa).

Substrate contacts are provided by residues 21 to 23, Arg-36, 59 to 62, Arg-119, and Arg-157; these read DFN and HLGR. Residues Lys-208, Gly-296, Glu-327, and 354–357 contribute to the ATP site; that span reads GGDS.

It belongs to the phosphoglycerate kinase family. In terms of assembly, monomer.

It is found in the cytoplasm. It catalyses the reaction (2R)-3-phosphoglycerate + ATP = (2R)-3-phospho-glyceroyl phosphate + ADP. It participates in carbohydrate degradation; glycolysis; pyruvate from D-glyceraldehyde 3-phosphate: step 2/5. In Streptococcus pneumoniae serotype 2 (strain D39 / NCTC 7466), this protein is Phosphoglycerate kinase.